We begin with the raw amino-acid sequence, 193 residues long: Interferon type A1/A2 (193 aa).

The signal sequence occupies residues 1–31 (MAVPASPQHPRGYGILLLTLLLKALATTASA). 3 disulfide bridges follow: cysteine 32/cysteine 129, cysteine 61/cysteine 155, and cysteine 68/cysteine 168. N-linked (GlcNAc...) asparagine glycans are attached at residues asparagine 65, asparagine 71, asparagine 108, and asparagine 186.

It belongs to the alpha/beta interferon family.

Its subcellular location is the secreted. Functionally, has antiviral activities. The protein is Interferon type A1/A2 (IFNA1) of Gallus gallus (Chicken).